An 836-amino-acid chain; its full sequence is Protein PDC2 (836 aa).

Residues 64-139 enclose the HTH CENPB-type domain; the sequence is ELIRRRKRAN…VKKLNINITG (76 aa). Low complexity predominate over residues 626–640; the sequence is TTSTSVVSDSPSGTT. The tract at residues 626-732 is disordered; the sequence is TTSTSVVSDS…NVQFGNGAGS (107 aa). The span at 641–651 shows a compositional bias: polar residues; sequence QKYNNISTYPN. The segment covering 677-698 has biased composition (low complexity); the sequence is GQELQNPQGQQQQEQQQQQQHQ. The segment covering 699 to 711 has biased composition (polar residues); the sequence is MSGYNFSPISNIE.

In terms of biological role, essential for the synthesis of pyruvate decarboxylase. The polypeptide is Protein PDC2 (PDC2) (Candida albicans (Yeast)).